Consider the following 153-residue polypeptide: uncharacterized protein (153 aa).

The signal sequence occupies residues 1–19 (MRKYIPLVLFIFSWPVLCA). Residues Arg46, Glu54, and Arg88 contribute to the active site.

This sequence belongs to the thermonuclease family.

This is an uncharacterized protein from Escherichia coli O157:H7.